The following is a 110-amino-acid chain: uncharacterized protein (110 aa).

This is an uncharacterized protein from Mycobacterium tuberculosis (strain CDC 1551 / Oshkosh).